The chain runs to 497 residues: 4,4'-diaponeurosporene oxygenase (497 aa).

Residue 7 to 19 participates in FAD binding; that stretch reads VIGGGLGGISAAI.

Belongs to the carotenoid/retinoid oxidoreductase family. CrtP subfamily. FAD is required as a cofactor.

The enzyme catalyses all-trans-4,4'-diaponeurosporene + 2 AH2 + 2 O2 = 4,4'-diaponeurosporenal + 2 A + 3 H2O. The protein operates within carotenoid biosynthesis; staphyloxanthin biosynthesis; staphyloxanthin from farnesyl diphosphate: step 3/5. Involved in the biosynthesis of the yellow-orange carotenoid staphyloxanthin, which plays a role in the virulence via its protective function against oxidative stress. Catalyzes the oxidation of the terminal methyl side group of 4,4'-diaponeurosporene to form 4,4'-diaponeurosporen-4-al. The C40 carotenoid lycopene is a poor substrate. The polypeptide is 4,4'-diaponeurosporene oxygenase (Staphylococcus aureus (strain Mu50 / ATCC 700699)).